The following is a 548-amino-acid chain: Solute carrier family 22 member 7 (548 aa).

A helical transmembrane segment spans residues 21-41 (VALLALPRVLLPLHFLLPIFL). Residue N91 is glycosylated (N-linked (GlcNAc...) asparagine). The next 11 membrane-spanning stretches (helical) occupy residues 146-166 (AAST…GYLS), 180-200 (VSTL…MFAI), 204-224 (LTGS…LEWL), 234-254 (VLSS…GYLI), 259-279 (WLLL…WWVP), 346-366 (ISLC…GLSL), 376-397 (YQTQ…YLSV), 404-423 (LTQA…RLLV), 432-452 (TVLA…AYLF), 466-486 (MGLT…AALL), and 493-513 (LPKL…LLLP). F441 acts as the Important for glutamate counteranion efflux in catalysis. The interval 522–548 (ETIQDVERKSAPTSLQEEEMPMKQVQN) is disordered.

Belongs to the major facilitator (TC 2.A.1) superfamily. Organic cation transporter (TC 2.A.1.19) family. Mainly expressed in liver and kidney. In kidney, expressed in proximal tubular cells. Also expressed in pancreas, small intestine, spinal cord, lung, brain and heart. Expressed in fetal liver.

The protein localises to the basolateral cell membrane. The protein resides in the apical cell membrane. It localises to the cell membrane. It is found in the cytoplasm. Its subcellular location is the cytosol. It carries out the reaction orotate(out) + L-glutamate(in) = orotate(in) + L-glutamate(out). The enzyme catalyses 3',5'-cyclic GMP(in) = 3',5'-cyclic GMP(out). The catalysed reaction is GMP(in) = GMP(out). It catalyses the reaction 2'-deoxyguanosine(in) = 2'-deoxyguanosine(out). It carries out the reaction GDP(in) = GDP(out). The enzyme catalyses guanosine(in) = guanosine(out). The catalysed reaction is GTP(in) = GTP(out). It catalyses the reaction 3',5'-cyclic AMP(in) = 3',5'-cyclic AMP(out). It carries out the reaction creatinine(in) = creatinine(out). The enzyme catalyses prostaglandin E2(out) = prostaglandin E2(in). The catalysed reaction is 2-oxoglutarate(in) = 2-oxoglutarate(out). It catalyses the reaction glutarate(in) = glutarate(out). It carries out the reaction urate(out) = urate(in). The enzyme catalyses estrone 3-sulfate(out) = estrone 3-sulfate(in). The catalysed reaction is prostaglandin F2alpha(out) = prostaglandin F2alpha(in). Its function is as follows. Functions as a Na(+)-independent bidirectional multispecific transporter. Contributes to the renal and hepatic elimination of endogenous organic compounds from the systemic circulation into the urine and bile, respectively. Capable of transporting a wide range of purine and pyrimidine nucleobases, nucleosides and nucleotides, with cGMP, 2'deoxyguanosine and GMP being the preferred substrates. Functions as a pH- and chloride-independent cGMP bidirectional facilitative transporter that can regulate both intracellular and extracellular levels of cGMP and may be involved in cGMP signaling pathways. Mediates orotate/glutamate bidirectional exchange and most likely display a physiological role in hepatic release of glutamate into the blood. Involved in renal secretion and possible reabsorption of creatinine. Able to uptake prostaglandin E2 (PGE2) and may contribute to PGE2 renal excretion. Also transports alpha-ketoglutarate and urate. Apart from the orotate/glutamate exchange, the counterions for the uptake of other SLC22A7/OAT2 substrates remain to be identified. In terms of biological role, non functional transporter. Involved in the uptake of prostaglandin F2-alpha (PGF2-alpha). The chain is Solute carrier family 22 member 7 from Homo sapiens (Human).